The primary structure comprises 160 residues: Large ribosomal subunit protein eL21 (160 aa).

Basic and acidic residues-rich tracts occupy residues 112–123 and 136–145; these read NDQKKKEAKEKG and REAHFVRTNG. Positions 112–145 are disordered; it reads NDQKKKEAKEKGTWVQLKRQPAPPREAHFVRTNG.

This sequence belongs to the eukaryotic ribosomal protein eL21 family. In terms of assembly, component of the large ribosomal subunit.

It localises to the cytoplasm. It is found in the cytosol. The protein localises to the endoplasmic reticulum. In terms of biological role, component of the large ribosomal subunit. The ribosome is a large ribonucleoprotein complex responsible for the synthesis of proteins in the cell. This is Large ribosomal subunit protein eL21 (RPL21) from Oryctolagus cuniculus (Rabbit).